A 532-amino-acid chain; its full sequence is Metal-staphylopine-binding protein CntA (532 aa).

Positions 1-20 (MRKLTKMSAMLLASGLILTG) are cleaved as a signal peptide. Residue cysteine 21 is the site of N-palmitoyl cysteine attachment. Cysteine 21 is lipidated: S-diacylglycerol cysteine. Arginine 165, arginine 418, and asparagine 448 together coordinate staphylopine.

Belongs to the bacterial solute-binding protein 5 family. In terms of assembly, the complex is composed of two ATP-binding proteins (CntD and CntF), two transmembrane proteins (CntB and CntC) and a solute-binding protein (CntA).

Its subcellular location is the cell membrane. With respect to regulation, nickel/cobalt import is reduced in the presence of zinc. In terms of biological role, part of the ABC transporter complex CntABCDF (Opp1) involved in the uptake of metal in complex with the metallophore staphylopine (StP). Involved in the import of divalent metals ions such as nickel, cobalt and zinc. Binds the metal via the metallophore StP, and transfers the StP-metal complex to the membrane-bound permease. Binds one molecule of StP/metal. Binds StP/Co(2+) and StP/Ni(2+) tighter than StP/Zn(2+). Plays a major role in nickel/cobalt import in zinc-depleted conditions. Contributes to virulence. Required for full urease activity in vitro. The protein is Metal-staphylopine-binding protein CntA of Staphylococcus aureus (strain NCTC 8325 / PS 47).